The chain runs to 152 residues: Large ribosomal subunit protein bL9 (152 aa).

It belongs to the bacterial ribosomal protein bL9 family.

Binds to the 23S rRNA. The protein is Large ribosomal subunit protein bL9 of Synechococcus sp. (strain RCC307).